Here is a 327-residue protein sequence, read N- to C-terminus: Ribosomal RNA small subunit methyltransferase H (327 aa).

S-adenosyl-L-methionine is bound by residues 36 to 38, aspartate 61, phenylalanine 88, aspartate 114, and glutamine 121; that span reads GGH.

Belongs to the methyltransferase superfamily. RsmH family.

The protein localises to the cytoplasm. It carries out the reaction cytidine(1402) in 16S rRNA + S-adenosyl-L-methionine = N(4)-methylcytidine(1402) in 16S rRNA + S-adenosyl-L-homocysteine + H(+). Its function is as follows. Specifically methylates the N4 position of cytidine in position 1402 (C1402) of 16S rRNA. This Chlorobium luteolum (strain DSM 273 / BCRC 81028 / 2530) (Pelodictyon luteolum) protein is Ribosomal RNA small subunit methyltransferase H.